The chain runs to 653 residues: Putative clathrin assembly protein At2g25430 (653 aa).

Residues 23-159 (VASNMAPDLE…ELALFERKSG (137 aa)) form the ENTH domain. Residues 160–171 (VSVNSGGNSSHH) are compositionally biased toward low complexity. The segment at 160 to 240 (VSVNSGGNSS…GGGGGGRDEK (81 aa)) is disordered. Residues 172-186 (SNNDDRYGRGRDDFR) show a composition bias toward basic and acidic residues. Over residues 197-214 (NGGGGGSDFRGDNNGYGG) the composition is skewed to gly residues. Serine 221 is modified (phosphoserine). Threonine 244 carries the post-translational modification Phosphothreonine. The span at 376–389 (RAKRGKSPERKEIE) shows a compositional bias: basic and acidic residues. Positions 376 to 431 (RAKRGKSPERKEIEAPPPVVEEEEPEPDMNEIKALPPPENYTPPPPPEPEPQPEKP) are disordered. A compositionally biased stretch (acidic residues) spans 395 to 404 (VEEEEPEPDM). Residues 410-425 (LPPPENYTPPPPPEPE) show a composition bias toward pro residues.

Its subcellular location is the membrane. The protein resides in the clathrin-coated pit. It is found in the golgi apparatus. The protein localises to the cytoplasmic vesicle. It localises to the clathrin-coated vesicle. This is Putative clathrin assembly protein At2g25430 from Arabidopsis thaliana (Mouse-ear cress).